A 122-amino-acid chain; its full sequence is Large ribosomal subunit protein uL14 (122 aa).

The protein belongs to the universal ribosomal protein uL14 family. As to quaternary structure, part of the 50S ribosomal subunit. Forms a cluster with proteins L3 and L19. In the 70S ribosome, L14 and L19 interact and together make contacts with the 16S rRNA in bridges B5 and B8.

In terms of biological role, binds to 23S rRNA. Forms part of two intersubunit bridges in the 70S ribosome. This Sulfurihydrogenibium sp. (strain YO3AOP1) protein is Large ribosomal subunit protein uL14.